The following is a 187-amino-acid chain: ATP synthase subunit b (187 aa).

A helical membrane pass occupies residues 31–51 (VAIMGLAIFVLFLILSYLLFN).

The protein belongs to the ATPase B chain family. As to quaternary structure, F-type ATPases have 2 components, F(1) - the catalytic core - and F(0) - the membrane proton channel. F(1) has five subunits: alpha(3), beta(3), gamma(1), delta(1), epsilon(1). F(0) has three main subunits: a(1), b(2) and c(10-14). The alpha and beta chains form an alternating ring which encloses part of the gamma chain. F(1) is attached to F(0) by a central stalk formed by the gamma and epsilon chains, while a peripheral stalk is formed by the delta and b chains.

Its subcellular location is the cell membrane. Its function is as follows. F(1)F(0) ATP synthase produces ATP from ADP in the presence of a proton or sodium gradient. F-type ATPases consist of two structural domains, F(1) containing the extramembraneous catalytic core and F(0) containing the membrane proton channel, linked together by a central stalk and a peripheral stalk. During catalysis, ATP synthesis in the catalytic domain of F(1) is coupled via a rotary mechanism of the central stalk subunits to proton translocation. In terms of biological role, component of the F(0) channel, it forms part of the peripheral stalk, linking F(1) to F(0). This Lachnoclostridium phytofermentans (strain ATCC 700394 / DSM 18823 / ISDg) (Clostridium phytofermentans) protein is ATP synthase subunit b.